Consider the following 110-residue polypeptide: PTS system oligo-beta-mannoside-specific EIIA component (110 aa).

One can recognise a PTS EIIA type-3 domain in the interval 9–107; the sequence is LTDEQISFQL…VKEMLDLFKT (99 aa). His83 serves as the catalytic Tele-phosphohistidine intermediate. At His83 the chain carries Phosphohistidine; by HPr.

The protein localises to the cytoplasm. The phosphoenolpyruvate-dependent sugar phosphotransferase system (sugar PTS), a major carbohydrate active transport system, catalyzes the phosphorylation of incoming sugar substrates concomitantly with their translocation across the cell membrane. The enzyme II GmuABC PTS system is involved in the transport of oligo-glucomannans such as cellobiose or mannobiose. In Bacillus subtilis (strain 168), this protein is PTS system oligo-beta-mannoside-specific EIIA component.